Consider the following 336-residue polypeptide: Flap endonuclease 1 (336 aa).

Residues 1 to 98 form an N-domain region; it reads MGVDLGDILS…GTLAARAQMK (98 aa). Mg(2+)-binding residues include aspartate 27, aspartate 80, glutamate 150, glutamate 152, aspartate 171, aspartate 173, and aspartate 234. The tract at residues 114–255 is I-domain; sequence DSFRYAQATA…RALKLIREHG (142 aa). An interaction with PCNA region spans residues 328–336; sequence GQSTLERWL.

This sequence belongs to the XPG/RAD2 endonuclease family. FEN1 subfamily. In terms of assembly, interacts with PCNA. PCNA stimulates the nuclease activity without altering cleavage specificity. Mg(2+) is required as a cofactor.

Functionally, structure-specific nuclease with 5'-flap endonuclease and 5'-3' exonuclease activities involved in DNA replication and repair. During DNA replication, cleaves the 5'-overhanging flap structure that is generated by displacement synthesis when DNA polymerase encounters the 5'-end of a downstream Okazaki fragment. Binds the unpaired 3'-DNA end and kinks the DNA to facilitate 5' cleavage specificity. Cleaves one nucleotide into the double-stranded DNA from the junction in flap DNA, leaving a nick for ligation. Also involved in the base excision repair (BER) pathway. Acts as a genome stabilization factor that prevents flaps from equilibrating into structures that lead to duplications and deletions. Also possesses 5'-3' exonuclease activity on nicked or gapped double-stranded DNA. The polypeptide is Flap endonuclease 1 (Methanothrix thermoacetophila (strain DSM 6194 / JCM 14653 / NBRC 101360 / PT) (Methanosaeta thermophila)).